The primary structure comprises 321 residues: DNA repair and recombination protein RadA (321 aa).

111 to 118 is a binding site for ATP; sequence GEFGSGKT.

It belongs to the eukaryotic RecA-like protein family.

In terms of biological role, involved in DNA repair and in homologous recombination. Binds and assemble on single-stranded DNA to form a nucleoprotein filament. Hydrolyzes ATP in a ssDNA-dependent manner and promotes DNA strand exchange between homologous DNA molecules. The protein is DNA repair and recombination protein RadA of Sulfolobus acidocaldarius (strain ATCC 33909 / DSM 639 / JCM 8929 / NBRC 15157 / NCIMB 11770).